The chain runs to 561 residues: MSETINTASQFPTFEKPTVQFNEKGWGPCELPDTFKDVPYQPFSKNDRLGKICDWTSTSNNDKKYQNKYASTFGTGNQYSYYHEEDETTFHLVDTARVQKPPHQRGRFRNMRNSRSGRGRNARGGINTHGMTTLSGKNVKARDPRRGMGKKFGNRGPPPKMRESSVAVRADWASIEEMDFPRLIKLSLPNIKEGVDIVTCGTLEYYDKTYDRINVKNEKPLQKIDRIVHTVTTTDDPVIRRLSKTIGNVFATDAILATIMCSTRSNYSWDIVIEKVGEKIFMDKRDHTEFDLLTVNETSVEPPTDDDSSCNSPRNLAIEATFINHNFSQQVLKTGDQEAKFKFQESNPFISEDEDIQVASVGYRYKKWELGSDIVLVARCEHDGVLQTPSGEPQFMSIKALNEWDSKLANGVEWRQKLDTQRGAVLANELRNNACKLAKWTVQAVLAGSDQLKLGYVSRINPRDHSRHVILGTQQFKPHEFATQINLSMDNAWGILRCIIDLVMKQKDGKYLIMKDPNKPIIRLYDIPDNTFDSDDSDDGEGDDGEGFQQVYNYANNGNKI.

The tract at residues 98–164 (VQKPPHQRGR…RGPPPKMRES (67 aa)) is disordered. Positions 100 to 121 (KPPHQRGRFRNMRNSRSGRGRN) are enriched in basic residues. A Phosphothreonine modification is found at Thr128. Residues 289–303 (EFDLLTVNETSVEPP) are RNA gate.

This sequence belongs to the eIF-3 subunit D family. Component of the eukaryotic translation initiation factor 3 (eIF-3) complex. The eIF-3 complex interacts with pix.

The protein localises to the cytoplasm. In terms of biological role, mRNA cap-binding component of the eukaryotic translation initiation factor 3 (eIF-3) complex, which is involved in protein synthesis of a specialized repertoire of mRNAs and, together with other initiation factors, stimulates binding of mRNA and methionyl-tRNAi to the 40S ribosome. The eIF-3 complex specifically targets and initiates translation of a subset of mRNAs involved in cell proliferation. In the eIF-3 complex, eif3d specifically recognizes and binds the 7-methylguanosine cap of a subset of mRNAs. This chain is Eukaryotic translation initiation factor 3 subunit D-1, found in Drosophila ananassae (Fruit fly).